Reading from the N-terminus, the 137-residue chain is Large ribosomal subunit protein uL11 (137 aa).

It belongs to the universal ribosomal protein uL11 family. In terms of assembly, part of the ribosomal stalk of the 50S ribosomal subunit. Interacts with L10 and the large rRNA to form the base of the stalk. L10 forms an elongated spine to which L12 dimers bind in a sequential fashion forming a multimeric L10(L12)X complex. In terms of processing, one or more lysine residues are methylated.

Forms part of the ribosomal stalk which helps the ribosome interact with GTP-bound translation factors. This chain is Large ribosomal subunit protein uL11, found in Mycoplasma pneumoniae (strain ATCC 29342 / M129 / Subtype 1) (Mycoplasmoides pneumoniae).